A 604-amino-acid chain; its full sequence is MSSMRIYVAIMKKPSVKHVDYVDKKASKPSWRVSSSATAGLRASSSLQLDVKKPADEILTARRSGNYQPSLWDFNYLQSLNTTHYKEERHLKREAELIEQVKMLLDEEMGAVQKLDLVDDLKNLGLSYFFEDQIKQILTFIYNEHECFRSNVEAKERDLYFTALGFRLLRQHGFQVSQEVFDCFKNEEGSDFKASLGDDTKGLVQLYEASFLLREGEDTLELARQYATKFLQKKVDHELIDDDSNLLSWIRHSLEIPLHWRIQRLEARWFLDAYATRHDVNPIILELAKLDFNIIQATQQEELKDLSRWWNSTCLVEKLPFVRDRLVESYFWAIALFEPHQYGYHRKIAAKIITLITSLDDVYDIYGTLDELQLFTDAIQRWDTESISRLAYYMQLFYMVLYNFVSELAYDGLKEKGFITIPYLQRSWADLVEAYLKEAKWFYNGYTPSMEEYLNNAYISIGATPVISQVFFTLATSIDKPVIESLYEYHRILRLSGMLVRLPDDLGTSPFEMKRGDVPKTIELYMKERNATEIEAQEHVRFLIREAWREMNTATAAADCPFTDDLVAAAANLGRAAQFMYLDGDGNHSQLHQRIASLLFEPYA.

Residues 1-36 constitute a chloroplast transit peptide; the sequence is MSSMRIYVAIMKKPSVKHVDYVDKKASKPSWRVSSS. Positions 323, 360, 364, 501, and 504 each coordinate (2E)-geranyl diphosphate. The Mg(2+) site is built by D360 and D364. A DDXXD motif motif is present at residues 360 to 364; it reads DDVYD. Mg(2+) is bound by residues D504, T508, and E512.

This sequence belongs to the terpene synthase family. Tpsb subfamily. In terms of assembly, monomer. It depends on Mg(2+) as a cofactor. Mn(2+) serves as cofactor.

It is found in the plastid. The protein resides in the chloroplast. The enzyme catalyses (2E)-geranyl diphosphate + H2O = linalool + diphosphate. It functions in the pathway secondary metabolite biosynthesis; terpenoid biosynthesis. Its function is as follows. Monoterpene synthase (mono-TPS) involved in the biosynthesis of monoterpenes natural products. Catalyzes the conversion of (2E)-geranyl diphosphate (GPP) into linalool. This Perilla frutescens (Beefsteak mint) protein is Linalool synthase Tps-5073L4, chloroplastic.